The chain runs to 121 residues: Large ribosomal subunit protein uL14 (121 aa).

Belongs to the universal ribosomal protein uL14 family. As to quaternary structure, part of the 50S ribosomal subunit. Forms a cluster with proteins L3 and L19. In the 70S ribosome, L14 and L19 interact and together make contacts with the 16S rRNA in bridges B5 and B8.

Binds to 23S rRNA. Forms part of two intersubunit bridges in the 70S ribosome. This chain is Large ribosomal subunit protein uL14, found in Legionella pneumophila (strain Paris).